The sequence spans 596 residues: Beta-glucuronidase (596 aa).

Residues Asp-168 and Asn-412 each coordinate D-glucuronate. Glu-413 acts as the Proton donor in catalysis. D-glucuronate-binding residues include Asn-464, Tyr-470, Glu-502, Trp-547, and Lys-566. Glu-502 acts as the Nucleophile in catalysis. The N-K motif motif lies at 564–566 (NKK).

The protein belongs to the glycosyl hydrolase 2 family.

Its subcellular location is the cytoplasm. The enzyme catalyses a beta-D-glucuronoside + H2O = D-glucuronate + an alcohol. Functionally, displays beta-glucuronidase activity with the artificial substrate p-nitrophenyl-beta-D-glucuronide (PNPG). Is probably involved in the metabolism of oligosaccharides containing the 3-O-beta-D-glucopyranosyl-beta-D-glucuronide structure released from bacterial and plant acidic carbohydrates. This Paenibacillus borealis protein is Beta-glucuronidase.